The following is a 561-amino-acid chain: DNA ligase (561 aa).

Position 253 (glutamate 253) interacts with ATP. The active-site N6-AMP-lysine intermediate is the lysine 255. ATP-binding residues include arginine 260, arginine 275, glutamate 304, phenylalanine 344, arginine 421, and lysine 427.

The protein belongs to the ATP-dependent DNA ligase family. Mg(2+) serves as cofactor.

The enzyme catalyses ATP + (deoxyribonucleotide)n-3'-hydroxyl + 5'-phospho-(deoxyribonucleotide)m = (deoxyribonucleotide)n+m + AMP + diphosphate.. Its function is as follows. DNA ligase that seals nicks in double-stranded DNA during DNA replication, DNA recombination and DNA repair. The sequence is that of DNA ligase from Halobacterium salinarum (strain ATCC 29341 / DSM 671 / R1).